A 100-amino-acid chain; its full sequence is Double-stranded DNA-binding protein (100 aa).

The DNA-binding element occupies 1–19 (MRKMMQREVTYTTAQLARM).

Homodimer. Homomultimer. Binds to double-stranded DNA giving rise to multimeric nucleoprotein complexes.

Its function is as follows. Histone-like nucleoprotein that binds to the viral dsDNA and responsible for wrapping and condensing the viral DNA about 4-fold. Forms a nucleoprotein complex in which the DNA adopts a right-handed toroidal conformation winding around a protein core. Binding specificity for the viral genome is based on supercoiling. The formation of the nucleoprotein complex at the genome ends, for which the binding affinity is highest, activates the initiation of viral DNA replication. The binding of p6 would recruit the complex formed by the TP and the DNA polymerase to the origin. Protein p6 is also involved in the early to late transcription switch. In Bacillus phage Nf (Bacteriophage Nf), this protein is Double-stranded DNA-binding protein.